Here is a 316-residue protein sequence, read N- to C-terminus: tRNA dimethylallyltransferase (316 aa).

Residue 17-24 (GPTASGKT) coordinates ATP. 19–24 (TASGKT) serves as a coordination point for substrate. Interaction with substrate tRNA regions lie at residues 42-45 (DSAL), 166-170 (QRLSR), 247-252 (RCVGYR), and 280-287 (KRQITWLR).

Belongs to the IPP transferase family. In terms of assembly, monomer. The cofactor is Mg(2+).

The catalysed reaction is adenosine(37) in tRNA + dimethylallyl diphosphate = N(6)-dimethylallyladenosine(37) in tRNA + diphosphate. In terms of biological role, catalyzes the transfer of a dimethylallyl group onto the adenine at position 37 in tRNAs that read codons beginning with uridine, leading to the formation of N6-(dimethylallyl)adenosine (i(6)A). The protein is tRNA dimethylallyltransferase of Cronobacter sakazakii (strain ATCC BAA-894) (Enterobacter sakazakii).